The primary structure comprises 137 residues: MTLTVRVISPDKTVWDAEADEVILPSTTGQLGILSGHAPLLTALDTGVLRVRTSKSQNWQAIALLGGFAEVEEDEVTILVNGGERGDTINLEEARTAYSQAQTKLNQVPAGDRQAQIQANQAFKRARARFQAAGGLV.

Belongs to the ATPase epsilon chain family. In terms of assembly, F-type ATPases have 2 components, CF(1) - the catalytic core - and CF(0) - the membrane proton channel. CF(1) has five subunits: alpha(3), beta(3), gamma(1), delta(1), epsilon(1). CF(0) has three main subunits: a, b and c.

The protein localises to the cellular thylakoid membrane. In terms of biological role, produces ATP from ADP in the presence of a proton gradient across the membrane. The polypeptide is ATP synthase epsilon chain (Trichormus variabilis (strain ATCC 29413 / PCC 7937) (Anabaena variabilis)).